The chain runs to 394 residues: Chorismate synthase (394 aa).

Arg-62 contributes to the NADP(+) binding site. Residues Arg-144–Ser-146, Gly-307, Lys-322–Thr-326, and Arg-349 contribute to the FMN site.

Belongs to the chorismate synthase family. In terms of assembly, homotetramer. It depends on FMNH2 as a cofactor.

It catalyses the reaction 5-O-(1-carboxyvinyl)-3-phosphoshikimate = chorismate + phosphate. The protein operates within metabolic intermediate biosynthesis; chorismate biosynthesis; chorismate from D-erythrose 4-phosphate and phosphoenolpyruvate: step 7/7. In terms of biological role, catalyzes the anti-1,4-elimination of the C-3 phosphate and the C-6 proR hydrogen from 5-enolpyruvylshikimate-3-phosphate (EPSP) to yield chorismate, which is the branch point compound that serves as the starting substrate for the three terminal pathways of aromatic amino acid biosynthesis. This reaction introduces a second double bond into the aromatic ring system. In Acetivibrio thermocellus (strain ATCC 27405 / DSM 1237 / JCM 9322 / NBRC 103400 / NCIMB 10682 / NRRL B-4536 / VPI 7372) (Clostridium thermocellum), this protein is Chorismate synthase.